The primary structure comprises 764 residues: DNA replication regulator DPB11 (764 aa).

3 BRCT domains span residues 1–99, 129–220, and 322–418; these read MKPF…MTGS, TNIT…PYYL, and NSTL…DLWS. Disordered stretches follow at residues 651–675 and 710–764; these read ETDSGRKKRSVSSSIMDVSSERQMP and TEQP…ELDS. The span at 739-751 shows a compositional bias: basic and acidic residues; the sequence is QDKKRTASLEKPM.

As to quaternary structure, interacts with SLD2.

The protein localises to the nucleus. Functionally, has a role in the initiation of DNA replication. Required at S-phase checkpoint. Required for the association of PSF1 with origins. Also required for the proper activation of RAD53 in response to DNA damage and replication blocks. Multicopy suppressor of DPB2 mutation. Overexpression restores the growth defect conferred by POL2 mutation. This is DNA replication regulator DPB11 (DPB11) from Saccharomyces cerevisiae (strain ATCC 204508 / S288c) (Baker's yeast).